We begin with the raw amino-acid sequence, 399 residues long: O-glucosyltransferase rumi homolog (399 aa).

A signal peptide spans 1–18 (MHFIIGIVICLSLSVIQS). N-linked (GlcNAc...) asparagine glycosylation is found at Asn-19 and Asn-67. 4 disulfide bridges follow: Cys-66-Cys-73, Cys-71-Cys-373, Cys-118-Cys-124, and Cys-277-Cys-300. Asp-149 serves as the catalytic Proton donor/acceptor. The segment at 189–194 (AIALYP) is interaction with the consensus sequence C-X-S-X-[PA]-C in peptide substrates. UDP-alpha-D-glucose contacts are provided by residues 224-228 (RGSRT), Arg-232, 271-273 (VTL), and 289-293 (AASFR).

This sequence belongs to the glycosyltransferase 90 family.

It is found in the endoplasmic reticulum lumen. The protein resides in the secreted. It participates in protein modification; protein glycosylation. Protein O-glucosyltransferase. Catalyzes the reaction that attaches glucose through an O-glycosidic linkage to a conserved serine residue found in the consensus sequence C-X-S-X-[PA]-C in epidermal growth factor-like repeats. Regulates Notch signaling by glucosylating Notch in the ER, glucosylation is required for the correct folding and cleavage of Notch. This is O-glucosyltransferase rumi homolog from Anopheles gambiae (African malaria mosquito).